The following is a 230-amino-acid chain: Fibrillarin-like rRNA/tRNA 2'-O-methyltransferase (230 aa).

S-adenosyl-L-methionine is bound by residues 87-88, 105-106, 130-131, and 150-153; these read TT, EF, DA, and DVAQ.

It belongs to the methyltransferase superfamily. Fibrillarin family. As to quaternary structure, interacts with nop5. Component of box C/D small ribonucleoprotein (sRNP) particles that contain rpl7ae, FlpA and nop5, plus a guide RNA.

In terms of biological role, involved in pre-rRNA and tRNA processing. Utilizes the methyl donor S-adenosyl-L-methionine to catalyze the site-specific 2'-hydroxyl methylation of ribose moieties in rRNA and tRNA. Site specificity is provided by a guide RNA that base pairs with the substrate. Methylation occurs at a characteristic distance from the sequence involved in base pairing with the guide RNA. This Methanococcus maripaludis (strain C5 / ATCC BAA-1333) protein is Fibrillarin-like rRNA/tRNA 2'-O-methyltransferase.